A 583-amino-acid polypeptide reads, in one-letter code: Ferredoxin--nitrite reductase, chloroplastic (583 aa).

The transit peptide at 1–22 (MSSLSVRFLSPPLFSSTPAWPR) directs the protein to the chloroplast. [4Fe-4S] cluster contacts are provided by C461, C467, C502, and C506. Position 506 (C506) interacts with siroheme.

This sequence belongs to the nitrite and sulfite reductase 4Fe-4S domain family. As to quaternary structure, monomer. Siroheme is required as a cofactor. [4Fe-4S] cluster serves as cofactor.

The protein localises to the plastid. It is found in the chloroplast. It carries out the reaction 6 oxidized [2Fe-2S]-[ferredoxin] + NH4(+) + 2 H2O = nitrite + 6 reduced [2Fe-2S]-[ferredoxin] + 8 H(+). It functions in the pathway nitrogen metabolism; nitrate reduction (assimilation). In Betula pendula (European white birch), this protein is Ferredoxin--nitrite reductase, chloroplastic (NIR1).